A 340-amino-acid chain; its full sequence is Protein-arginine kinase (340 aa).

In terms of domain architecture, Phosphagen kinase C-terminal spans 14–244 (IVITTRIRLA…EQIINQENLS (231 aa)). ATP-binding positions include 17-21 (TTRIR), His81, Arg115, 166-170 (RASVM), and 197-202 (RGLWGE).

It belongs to the ATP:guanido phosphotransferase family.

The catalysed reaction is L-arginyl-[protein] + ATP = N(omega)-phospho-L-arginyl-[protein] + ADP + H(+). In terms of biological role, catalyzes the specific phosphorylation of arginine residues in proteins. In Clostridium acetobutylicum (strain ATCC 824 / DSM 792 / JCM 1419 / IAM 19013 / LMG 5710 / NBRC 13948 / NRRL B-527 / VKM B-1787 / 2291 / W), this protein is Protein-arginine kinase.